Reading from the N-terminus, the 453-residue chain is MPLPIVAIIGRPNVGKSTIVNRLAESKDAIVHDEPGITRDRTYRNAYWEDREFQVVDTGGLVFDDNTEFLPLIREQAMAALVEASVAIFVVDGQTGLTGGDEEIAQWLRQQTIPILLAVNKCESITEGLTQAAMFWELGLGEPYPISGIHGNGTGELLDDLITYLPTQGEITETNQTKIAIVGRPNVGKSSLLNSFIGEKRAIVSPISGTTRDAIDTVVERNGKTYRLIDTAGIRKKKNVEYGAEFFGINRAFKAIRRAEVVMFVIDALDGVTEQDQKLANRIIEDGRACVIVVNKWDAIEKDNYTIYTYEQEVRSRLYFVEWAEMIFVSALTGKRVEKIINLIDNAANEYQRRVTTSVINEVLEEAISWNSPPTNRQGRQGKIYYGTQVTSKPPTIALFVNDPKRFPENYRRYIQSQFRQHLGFTGTPIRLLWRGKKAREVEQNTVNRATRV.

2 EngA-type G domains span residues 4-169 and 177-352; these read PIVA…PTQG and TKIA…NEYQ. GTP is bound by residues 10–17, 57–61, 120–123, 183–190, 230–234, and 295–298; these read GRPNVGKS, DTGGL, NKCE, DTAGI, and NKWD. Positions 353–438 constitute a KH-like domain; it reads RRVTTSVINE…PIRLLWRGKK (86 aa).

It belongs to the TRAFAC class TrmE-Era-EngA-EngB-Septin-like GTPase superfamily. EngA (Der) GTPase family. In terms of assembly, associates with the 50S ribosomal subunit.

In terms of biological role, GTPase that plays an essential role in the late steps of ribosome biogenesis. The chain is GTPase Der from Trichodesmium erythraeum (strain IMS101).